Reading from the N-terminus, the 199-residue chain is Peroxynitrite isomerase (199 aa).

The GXWXGXG motif lies at 20 to 26 (GVWEGSG). Lysine 158 and histidine 190 together coordinate heme b.

It belongs to the nitrobindin family. Homodimer. Requires heme b as cofactor.

The catalysed reaction is peroxynitrite = nitrate. It participates in nitrogen metabolism. Functionally, heme-binding protein able to scavenge peroxynitrite and to protect free L-tyrosine against peroxynitrite-mediated nitration, by acting as a peroxynitrite isomerase that converts peroxynitrite to nitrate. Therefore, this protein likely plays a role in peroxynitrite sensing and in the detoxification of reactive nitrogen and oxygen species (RNS and ROS, respectively). Is able to bind nitric oxide (NO) in vitro, but may act as a sensor of peroxynitrite levels in vivo. The protein is Peroxynitrite isomerase of Clavibacter sepedonicus (Clavibacter michiganensis subsp. sepedonicus).